Consider the following 173-residue polypeptide: NADH-ubiquinone oxidoreductase chain 6 (173 aa).

Helical transmembrane passes span 1–21, 27–47, 48–68, 88–108, and 139–159; these read MTYL…AVAS, YGVV…LSLG, VSFV…VVFV, VGYG…GGLI, and YGVG…FVVL.

This sequence belongs to the complex I subunit 6 family.

It localises to the mitochondrion membrane. The catalysed reaction is a ubiquinone + NADH + 5 H(+)(in) = a ubiquinol + NAD(+) + 4 H(+)(out). Functionally, core subunit of the mitochondrial membrane respiratory chain NADH dehydrogenase (Complex I) that is believed to belong to the minimal assembly required for catalysis. Complex I functions in the transfer of electrons from NADH to the respiratory chain. The immediate electron acceptor for the enzyme is believed to be ubiquinone. In Calidris maritima (Purple sandpiper), this protein is NADH-ubiquinone oxidoreductase chain 6 (MT-ND6).